The sequence spans 531 residues: Light-independent protochlorophyllide reductase subunit B (531 aa).

D36 serves as a coordination point for [4Fe-4S] cluster. The active-site Proton donor is D287. 422–423 (GL) serves as a coordination point for substrate.

The protein belongs to the ChlB/BchB/BchZ family. In terms of assembly, protochlorophyllide reductase is composed of three subunits; BchL, BchN and BchB. Forms a heterotetramer of two BchB and two BchN subunits. [4Fe-4S] cluster is required as a cofactor.

The catalysed reaction is chlorophyllide a + oxidized 2[4Fe-4S]-[ferredoxin] + 2 ADP + 2 phosphate = protochlorophyllide a + reduced 2[4Fe-4S]-[ferredoxin] + 2 ATP + 2 H2O. The protein operates within porphyrin-containing compound metabolism; bacteriochlorophyll biosynthesis (light-independent). Component of the dark-operative protochlorophyllide reductase (DPOR) that uses Mg-ATP and reduced ferredoxin to reduce ring D of protochlorophyllide (Pchlide) to form chlorophyllide a (Chlide). This reaction is light-independent. The NB-protein (BchN-BchB) is the catalytic component of the complex. This Rhodopseudomonas palustris (strain BisA53) protein is Light-independent protochlorophyllide reductase subunit B.